The chain runs to 379 residues: Glutamate 5-kinase (379 aa).

Lysine 15 contributes to the ATP binding site. 3 residues coordinate substrate: serine 59, aspartate 146, and asparagine 158. Threonine 178 to aspartate 179 is a binding site for ATP. In terms of domain architecture, PUA spans arginine 285–serine 363.

The protein belongs to the glutamate 5-kinase family.

It is found in the cytoplasm. The catalysed reaction is L-glutamate + ATP = L-glutamyl 5-phosphate + ADP. The protein operates within amino-acid biosynthesis; L-proline biosynthesis; L-glutamate 5-semialdehyde from L-glutamate: step 1/2. In terms of biological role, catalyzes the transfer of a phosphate group to glutamate to form L-glutamate 5-phosphate. In Paracidovorax citrulli (strain AAC00-1) (Acidovorax citrulli), this protein is Glutamate 5-kinase.